Reading from the N-terminus, the 349-residue chain is Short-wave-sensitive opsin 1 (349 aa).

The Extracellular segment spans residues 1–34 (MSKMSEEEEFLLFKNISLVGPWDGPQYHLAPVWA). Residue Asn15 is glycosylated (N-linked (GlcNAc...) asparagine). A helical transmembrane segment spans residues 35–59 (FHLQAVFMGFVFFVGTPLNATVLVA). Residues 60–71 (TLRYRKLRQPLN) lie on the Cytoplasmic side of the membrane. The helical transmembrane segment at 72–97 (YILVNVSLGGFIYCIFSVFIVFITSC) threads the bilayer. The Extracellular portion of the chain corresponds to 98-111 (YGYFVFGRHVCALE). Cys108 and Cys185 are disulfide-bonded. The chain crosses the membrane as a helical span at residues 112–131 (AFLGCTAGLVTGWSLAFLAF). At 132–150 (ERYIIICKPFGNFRFSSKH) the chain is on the cytoplasmic side. The chain crosses the membrane as a helical span at residues 151–174 (ALMVVVATWTIGIGVSIPPFFGWS). Over 175-200 (RFVPEGLQCSCGPDWYTVGTKYYSEY) the chain is Extracellular. Residues 201-228 (YTWFLFIFCYIVPLSLICFSYSQLLGAL) form a helical membrane-spanning segment. Residues 229–250 (RAVAAQQQESASTQKAEREVSH) lie on the Cytoplasmic side of the membrane. A helical membrane pass occupies residues 251-274 (MVVVMVGSFCLCYTPYAALAMYIV). Topologically, residues 275 to 282 (NNRNHGVD) are extracellular. The chain crosses the membrane as a helical span at residues 283–307 (LRLVTIPAFFSKSACVYNPIIYCFM). Lys294 bears the N6-(retinylidene)lysine mark. Residues 308-349 (NKQFRACIMEMVCGKPMTDESELSSSQKTEVSTVSSSQVGPN) lie on the Cytoplasmic side of the membrane. The segment at 327 to 349 (ESELSSSQKTEVSTVSSSQVGPN) is disordered. A compositionally biased stretch (polar residues) spans 330–349 (LSSSQKTEVSTVSSSQVGPN).

It belongs to the G-protein coupled receptor 1 family. Opsin subfamily. Phosphorylated on some or all of the serine and threonine residues present in the C-terminal region.

It localises to the cell membrane. Its subcellular location is the photoreceptor inner segment. The protein resides in the cell projection. It is found in the cilium. The protein localises to the photoreceptor outer segment. It localises to the cytoplasm. Its subcellular location is the perinuclear region. Its function is as follows. Visual pigments are the light-absorbing molecules that mediate vision. They consist of an apoprotein, opsin, covalently linked to cis-retinal. Required for the maintenance of cone outer segment organization in the ventral retina, but not essential for the maintenance of functioning cone photoreceptors. Involved in ensuring correct abundance and localization of retinal membrane proteins. May increase spectral sensitivity in dim light. This is Short-wave-sensitive opsin 1 (OPN1SW) from Bos taurus (Bovine).